A 569-amino-acid chain; its full sequence is Sulfite reductase [NADPH] hemoprotein beta-component (569 aa).

The [4Fe-4S] cluster site is built by Cys433, Cys439, Cys478, and Cys482. Cys482 provides a ligand contact to siroheme.

Belongs to the nitrite and sulfite reductase 4Fe-4S domain family. Alpha(8)-beta(8). The alpha component is a flavoprotein, the beta component is a hemoprotein. It depends on siroheme as a cofactor. [4Fe-4S] cluster serves as cofactor.

The catalysed reaction is hydrogen sulfide + 3 NADP(+) + 3 H2O = sulfite + 3 NADPH + 4 H(+). It functions in the pathway sulfur metabolism; hydrogen sulfide biosynthesis; hydrogen sulfide from sulfite (NADPH route): step 1/1. Its function is as follows. Component of the sulfite reductase complex that catalyzes the 6-electron reduction of sulfite to sulfide. This is one of several activities required for the biosynthesis of L-cysteine from sulfate. This Buchnera aphidicola subsp. Acyrthosiphon pisum (strain Tuc7) protein is Sulfite reductase [NADPH] hemoprotein beta-component.